Here is a 372-residue protein sequence, read N- to C-terminus: Queuine tRNA-ribosyltransferase (372 aa).

The active-site Proton acceptor is the Asp-90. Substrate contacts are provided by residues 90 to 94 (DSGGF), Asp-144, Gln-193, and Gly-220. Residues 251–257 (GVGTPED) form an RNA binding region. Asp-270 serves as the catalytic Nucleophile. The tract at residues 275 to 279 (TRNAR) is RNA binding; important for wobble base 34 recognition. The Zn(2+) site is built by Cys-308, Cys-310, Cys-313, and His-339.

Belongs to the queuine tRNA-ribosyltransferase family. As to quaternary structure, homodimer. Within each dimer, one monomer is responsible for RNA recognition and catalysis, while the other monomer binds to the replacement base PreQ1. The cofactor is Zn(2+).

The catalysed reaction is 7-aminomethyl-7-carbaguanine + guanosine(34) in tRNA = 7-aminomethyl-7-carbaguanosine(34) in tRNA + guanine. Its pathway is tRNA modification; tRNA-queuosine biosynthesis. Catalyzes the base-exchange of a guanine (G) residue with the queuine precursor 7-aminomethyl-7-deazaguanine (PreQ1) at position 34 (anticodon wobble position) in tRNAs with GU(N) anticodons (tRNA-Asp, -Asn, -His and -Tyr). Catalysis occurs through a double-displacement mechanism. The nucleophile active site attacks the C1' of nucleotide 34 to detach the guanine base from the RNA, forming a covalent enzyme-RNA intermediate. The proton acceptor active site deprotonates the incoming PreQ1, allowing a nucleophilic attack on the C1' of the ribose to form the product. After dissociation, two additional enzymatic reactions on the tRNA convert PreQ1 to queuine (Q), resulting in the hypermodified nucleoside queuosine (7-(((4,5-cis-dihydroxy-2-cyclopenten-1-yl)amino)methyl)-7-deazaguanosine). This chain is Queuine tRNA-ribosyltransferase, found in Sulfurimonas denitrificans (strain ATCC 33889 / DSM 1251) (Thiomicrospira denitrificans (strain ATCC 33889 / DSM 1251)).